The following is a 287-amino-acid chain: Phosphatidylserine decarboxylase proenzyme (287 aa).

Catalysis depends on charge relay system; for autoendoproteolytic cleavage activity residues Asp86, His143, and Ser250. The active-site Schiff-base intermediate with substrate; via pyruvic acid; for decarboxylase activity is the Ser250. Residue Ser250 is modified to Pyruvic acid (Ser); by autocatalysis.

Belongs to the phosphatidylserine decarboxylase family. PSD-B subfamily. Prokaryotic type I sub-subfamily. Heterodimer of a large membrane-associated beta subunit and a small pyruvoyl-containing alpha subunit. It depends on pyruvate as a cofactor. Is synthesized initially as an inactive proenzyme. Formation of the active enzyme involves a self-maturation process in which the active site pyruvoyl group is generated from an internal serine residue via an autocatalytic post-translational modification. Two non-identical subunits are generated from the proenzyme in this reaction, and the pyruvate is formed at the N-terminus of the alpha chain, which is derived from the carboxyl end of the proenzyme. The autoendoproteolytic cleavage occurs by a canonical serine protease mechanism, in which the side chain hydroxyl group of the serine supplies its oxygen atom to form the C-terminus of the beta chain, while the remainder of the serine residue undergoes an oxidative deamination to produce ammonia and the pyruvoyl prosthetic group on the alpha chain. During this reaction, the Ser that is part of the protease active site of the proenzyme becomes the pyruvoyl prosthetic group, which constitutes an essential element of the active site of the mature decarboxylase.

The protein resides in the cell membrane. The catalysed reaction is a 1,2-diacyl-sn-glycero-3-phospho-L-serine + H(+) = a 1,2-diacyl-sn-glycero-3-phosphoethanolamine + CO2. It functions in the pathway phospholipid metabolism; phosphatidylethanolamine biosynthesis; phosphatidylethanolamine from CDP-diacylglycerol: step 2/2. Catalyzes the formation of phosphatidylethanolamine (PtdEtn) from phosphatidylserine (PtdSer). This Wigglesworthia glossinidia brevipalpis protein is Phosphatidylserine decarboxylase proenzyme.